We begin with the raw amino-acid sequence, 741 residues long: uncharacterized protein (741 aa).

A coiled-coil region spans residues 64 to 103 (VETLLCMLEQLTIRIEFLTKEIAQQEAAYKDIQNTQKSLV). A compositionally biased stretch (polar residues) spans 137-155 (FERQNRTAPLQSKVTTASL). 3 disordered regions span residues 137–214 (FERQ…TGLP), 280–318 (RTYSSISSSSSPFKKKTQSHLPNRTTEVPSISKQLSKSS), and 330–364 (SVSSVTKSPSPTPQSAPRAQSASTETAQDLDFLTP). 2 stretches are compositionally biased toward low complexity: residues 161–173 (RTSMSSSPTASRT) and 197–209 (KSKSVLPPSKSLA). The span at 298 to 308 (SHLPNRTTEVP) shows a compositional bias: polar residues. 2 stretches are compositionally biased toward low complexity: residues 309–318 (SISKQLSKSS) and 330–344 (SVSSVTKSPSPTPQS). Residues 346-356 (PRAQSASTETA) are compositionally biased toward polar residues. 499–506 (GPPGTGKT) lines the ATP pocket.

The protein belongs to the AAA ATPase family.

The protein resides in the cytoplasm. It localises to the nucleus. This is an uncharacterized protein from Schizosaccharomyces pombe (strain 972 / ATCC 24843) (Fission yeast).